The chain runs to 134 residues: ATP synthase epsilon chain (134 aa).

The protein belongs to the ATPase epsilon chain family. In terms of assembly, F-type ATPases have 2 components, CF(1) - the catalytic core - and CF(0) - the membrane proton channel. CF(1) has five subunits: alpha(3), beta(3), gamma(1), delta(1), epsilon(1). CF(0) has three main subunits: a, b and c.

Its subcellular location is the cell membrane. Produces ATP from ADP in the presence of a proton gradient across the membrane. This Ruminococcus albus (strain ATCC 27210 / DSM 20455 / JCM 14654 / NCDO 2250 / 7) protein is ATP synthase epsilon chain.